We begin with the raw amino-acid sequence, 268 residues long: Tryptophan synthase alpha chain (268 aa).

Catalysis depends on proton acceptor residues Glu49 and Asp60.

This sequence belongs to the TrpA family. Tetramer of two alpha and two beta chains.

The catalysed reaction is (1S,2R)-1-C-(indol-3-yl)glycerol 3-phosphate + L-serine = D-glyceraldehyde 3-phosphate + L-tryptophan + H2O. It participates in amino-acid biosynthesis; L-tryptophan biosynthesis; L-tryptophan from chorismate: step 5/5. Its function is as follows. The alpha subunit is responsible for the aldol cleavage of indoleglycerol phosphate to indole and glyceraldehyde 3-phosphate. The polypeptide is Tryptophan synthase alpha chain (Shigella dysenteriae serotype 1 (strain Sd197)).